The primary structure comprises 780 residues: Oocyte zinc finger protein XlCOF8.4 (780 aa).

C2H2-type zinc fingers lie at residues 250-272 (FPCSECGKCFAGSSELNVHRRTH), 278-300 (FSCSQCGKCFSNQTKLKYHHRTH), 306-328 (FSCSECGKCFSTPHVRARHQKTH), 334-356 (FPCSECGKCFARSSDVTVHRRTH), 362-384 (YSCSQCGKCFTRSSDLNVHRRTH), 390-412 (YSCSHCGKCFTTSSELNVHRRTH), 418-440 (YSCSECGKSFPTSSEFTSHWKTH), 446-468 (FSCVQCGKCFSKDTHLKYHYRTH), 474-496 (FSCFECGKCFTHNGSLKVHLKIH), 618-640 (LSCSECGKCFSTYHVLARHQKTH), 646-668 (FSCSECEKCYARSSDLNVHRRTH), 674-696 (YSCSECGKCFTRSSDFNVHRRTH), 702-724 (YSCSECGRCFPTSSVLTSHWRTH), 730-752 (FSCTECGKCFSRETYLKYHHRTH), and 758-780 (FSCSECGKCFTCNSSLKVHFQLH).

It belongs to the krueppel C2H2-type zinc-finger protein family.

The protein resides in the nucleus. Functionally, may be involved in transcriptional regulation. The chain is Oocyte zinc finger protein XlCOF8.4 from Xenopus laevis (African clawed frog).